The following is a 621-amino-acid chain: Probable potassium transport system protein Kup 2 (621 aa).

12 helical membrane passes run 9 to 29 (MAGLTLAALGVVYGDIGTSPL), 48 to 68 (IFGILSLIFWSLIFVVSVKYV), 101 to 121 (IVLLGLFGAALFYGDAIITPA), 136 to 156 (SGMEAYVLPMAVGVLVGLFLL), 164 to 184 (VGLMFGPVMMVWFAILGILGL), 210 to 230 (GFHAFLTLGSVVLALTGAEAL), 246 to 266 (WFSLVLPGLGLNYFGQGALLM), 275 to 295 (PFFLLAPDWALLPMIALATLA), 336 to 356 (IYMPFINWALLVAVLVVVLTF), 364 to 384 (AAYGIAVTGTMLITTMLFFVV), 393 to 413 (LPLALGITLLFGVIDTAFFAA), and 418 to 438 (VADGGWLPLVMGMAIFTLMST).

The protein belongs to the HAK/KUP transporter (TC 2.A.72) family.

The protein resides in the cell inner membrane. The catalysed reaction is K(+)(in) + H(+)(in) = K(+)(out) + H(+)(out). Its function is as follows. Transport of potassium into the cell. Likely operates as a K(+):H(+) symporter. The chain is Probable potassium transport system protein Kup 2 from Chromobacterium violaceum (strain ATCC 12472 / DSM 30191 / JCM 1249 / CCUG 213 / NBRC 12614 / NCIMB 9131 / NCTC 9757 / MK).